Consider the following 447-residue polypeptide: Serine/threonine-protein phosphatase 2A 55 kDa regulatory subunit B delta isoform (447 aa).

7 WD repeats span residues 26 to 65 (AEADIISTVEFNYSGELLATGDKGGRVVIFQREQESKNRP), 91 to 132 (EIEE…KRAE), 175 to 213 (AHTYHINSISVNSDYETYLSADDLRINLWHLEITDRSFN), 224 to 264 (ELTE…LCDR), 283 to 321 (EIISSISDVKFSHSGRYMMTRDYLSVKVWDLNMENRPVE), 338 to 379 (ENDC…DITL), and 414 to 447 (DFNKKILHTAWHPKENVIAVAATNNLYIFQDKMN).

It belongs to the phosphatase 2A regulatory subunit B family. PP2A consists of a common heterodimeric core enzyme, composed of a 36 kDa catalytic subunit (subunit C) and a 65 kDa constant regulatory subunit (PR65 or subunit A), that associates with a variety of regulatory subunits.

It localises to the cytoplasm. Functionally, substrate-recognition subunit of protein phosphatase 2A (PP2A) that plays a key role in cell cycle by controlling mitosis entry and exit. The activity of PP2A complexes containing PPP2R2D (PR55-delta) fluctuate during the cell cycle: the activity is high in interphase and low in mitosis. The polypeptide is Serine/threonine-protein phosphatase 2A 55 kDa regulatory subunit B delta isoform (ppp2r2d) (Danio rerio (Zebrafish)).